The chain runs to 209 residues: Imidazole glycerol phosphate synthase subunit HisH (209 aa).

Residues 5-209 enclose the Glutamine amidotransferase type-1 domain; the sequence is AIAIIDYDMG…LRNFVALVKD (205 aa). The active-site Nucleophile is the C83. Catalysis depends on residues H188 and E190.

In terms of assembly, heterodimer of HisH and HisF.

The protein resides in the cytoplasm. The enzyme catalyses 5-[(5-phospho-1-deoxy-D-ribulos-1-ylimino)methylamino]-1-(5-phospho-beta-D-ribosyl)imidazole-4-carboxamide + L-glutamine = D-erythro-1-(imidazol-4-yl)glycerol 3-phosphate + 5-amino-1-(5-phospho-beta-D-ribosyl)imidazole-4-carboxamide + L-glutamate + H(+). It carries out the reaction L-glutamine + H2O = L-glutamate + NH4(+). It functions in the pathway amino-acid biosynthesis; L-histidine biosynthesis; L-histidine from 5-phospho-alpha-D-ribose 1-diphosphate: step 5/9. Its function is as follows. IGPS catalyzes the conversion of PRFAR and glutamine to IGP, AICAR and glutamate. The HisH subunit catalyzes the hydrolysis of glutamine to glutamate and ammonia as part of the synthesis of IGP and AICAR. The resulting ammonia molecule is channeled to the active site of HisF. The polypeptide is Imidazole glycerol phosphate synthase subunit HisH (Thermosynechococcus vestitus (strain NIES-2133 / IAM M-273 / BP-1)).